The chain runs to 266 residues: Oxygen-evolving enhancer protein 2-3, chloroplastic (266 aa).

Residues 1-80 (MASTQCFLHH…VGSKVSPADA (80 aa)) constitute a chloroplast transit peptide.

This sequence belongs to the PsbP family.

It is found in the plastid. Its subcellular location is the chloroplast thylakoid membrane. In terms of biological role, may be involved in the regulation of photosystem II. The chain is Oxygen-evolving enhancer protein 2-3, chloroplastic (PSBP3) from Nicotiana tabacum (Common tobacco).